The chain runs to 392 residues: DNA primase small subunit PriS (392 aa).

Active-site residues include Asp-98, Asp-100, and Asp-295.

The protein belongs to the eukaryotic-type primase small subunit family. As to quaternary structure, heterodimer of a small subunit (PriS) and a large subunit (PriL). Requires Mg(2+) as cofactor. Mn(2+) is required as a cofactor.

In terms of biological role, catalytic subunit of DNA primase, an RNA polymerase that catalyzes the synthesis of short RNA molecules used as primers for DNA polymerase during DNA replication. The small subunit contains the primase catalytic core and has DNA synthesis activity on its own. Binding to the large subunit stabilizes and modulates the activity, increasing the rate of DNA synthesis while decreasing the length of the DNA fragments, and conferring RNA synthesis capability. The DNA polymerase activity may enable DNA primase to also catalyze primer extension after primer synthesis. May also play a role in DNA repair. In Haloarcula marismortui (strain ATCC 43049 / DSM 3752 / JCM 8966 / VKM B-1809) (Halobacterium marismortui), this protein is DNA primase small subunit PriS.